The following is a 323-amino-acid chain: Beta-ketoacyl-[acyl-carrier-protein] synthase III (323 aa).

Active-site residues include Cys-113 and His-250. The segment at 251–255 (QANRR) is ACP-binding. Asn-280 is a catalytic residue.

This sequence belongs to the thiolase-like superfamily. FabH family. Homodimer.

The protein localises to the cytoplasm. The catalysed reaction is malonyl-[ACP] + acetyl-CoA + H(+) = 3-oxobutanoyl-[ACP] + CO2 + CoA. It participates in lipid metabolism; fatty acid biosynthesis. Its function is as follows. Catalyzes the condensation reaction of fatty acid synthesis by the addition to an acyl acceptor of two carbons from malonyl-ACP. Catalyzes the first condensation reaction which initiates fatty acid synthesis and may therefore play a role in governing the total rate of fatty acid production. Possesses both acetoacetyl-ACP synthase and acetyl transacylase activities. Its substrate specificity determines the biosynthesis of branched-chain and/or straight-chain of fatty acids. The protein is Beta-ketoacyl-[acyl-carrier-protein] synthase III of Rhizobium johnstonii (strain DSM 114642 / LMG 32736 / 3841) (Rhizobium leguminosarum bv. viciae).